The sequence spans 115 residues: Protein V2 (115 aa).

This sequence belongs to the geminiviridae protein AV2/V2 family. In terms of assembly, interacts with host SGS3.

It localises to the host cytoplasm. The protein localises to the host perinuclear region. In terms of biological role, through its interaction with host SGS3, acts as a suppressor of RNA-mediated gene silencing, also known as post-transcriptional gene silencing (PTGS), a mechanism of plant viral defense that limits the accumulation of viral RNAs. In Cynanchum acutum (Little mallow), this protein is Protein V2.